Reading from the N-terminus, the 145-residue chain is 3-dehydroquinate dehydratase (145 aa).

Tyr23 (proton acceptor) is an active-site residue. Asn74, His80, and Asp87 together coordinate substrate. His100 serves as the catalytic Proton donor. Substrate contacts are provided by residues 101-102 and Arg111; that span reads IS.

This sequence belongs to the type-II 3-dehydroquinase family. As to quaternary structure, homododecamer.

The catalysed reaction is 3-dehydroquinate = 3-dehydroshikimate + H2O. It functions in the pathway metabolic intermediate biosynthesis; chorismate biosynthesis; chorismate from D-erythrose 4-phosphate and phosphoenolpyruvate: step 3/7. Functionally, catalyzes a trans-dehydration via an enolate intermediate. The protein is 3-dehydroquinate dehydratase of Mycobacterium leprae (strain Br4923).